Reading from the N-terminus, the 206-residue chain is Large ribosomal subunit protein uL4 (206 aa).

The disordered stretch occupies residues 48 to 78 (THSVKTRGHVSGGGAKPWRQKGTGRARAGSN).

The protein belongs to the universal ribosomal protein uL4 family. Part of the 50S ribosomal subunit.

Functionally, one of the primary rRNA binding proteins, this protein initially binds near the 5'-end of the 23S rRNA. It is important during the early stages of 50S assembly. It makes multiple contacts with different domains of the 23S rRNA in the assembled 50S subunit and ribosome. Forms part of the polypeptide exit tunnel. This Lawsonia intracellularis (strain PHE/MN1-00) protein is Large ribosomal subunit protein uL4.